Consider the following 532-residue polypeptide: Probable calcium-binding mitochondrial carrier CBG00135 (532 aa).

EF-hand domains follow at residues glutamate 70–histidine 105, proline 107–isoleucine 136, alanine 137–asparagine 172, and leucine 173–threonine 208. Aspartate 83, aspartate 85, aspartate 87, serine 89, and aspartate 94 together coordinate Ca(2+). Residues aspartate 150, asparagine 152, aspartate 154, glutamate 156, and glutamate 161 each coordinate Ca(2+). 3 Solcar repeats span residues glycine 243–tryptophan 329, leucine 339–cysteine 425, and proline 436–glutamine 526. Helical transmembrane passes span leucine 249 to phenylalanine 266, glycine 304 to tyrosine 323, serine 349 to methionine 362, glycine 400 to tyrosine 419, leucine 442 to leucine 459, and glycine 501 to valine 518.

Belongs to the mitochondrial carrier (TC 2.A.29) family.

It is found in the mitochondrion inner membrane. Calcium-dependent mitochondrial solute carrier. The chain is Probable calcium-binding mitochondrial carrier CBG00135 from Caenorhabditis briggsae.